The chain runs to 209 residues: Ribosomal RNA large subunit methyltransferase E (209 aa).

Residues Gly63, Trp65, Asp83, Asp99, and Asp124 each coordinate S-adenosyl-L-methionine. Lys164 serves as the catalytic Proton acceptor.

This sequence belongs to the class I-like SAM-binding methyltransferase superfamily. RNA methyltransferase RlmE family.

It is found in the cytoplasm. The enzyme catalyses uridine(2552) in 23S rRNA + S-adenosyl-L-methionine = 2'-O-methyluridine(2552) in 23S rRNA + S-adenosyl-L-homocysteine + H(+). In terms of biological role, specifically methylates the uridine in position 2552 of 23S rRNA at the 2'-O position of the ribose in the fully assembled 50S ribosomal subunit. This is Ribosomal RNA large subunit methyltransferase E from Shewanella frigidimarina (strain NCIMB 400).